A 380-amino-acid chain; its full sequence is Putative glutamate--cysteine ligase 2-1 (380 aa).

The protein belongs to the glutamate--cysteine ligase type 2 family. YbdK subfamily.

The catalysed reaction is L-cysteine + L-glutamate + ATP = gamma-L-glutamyl-L-cysteine + ADP + phosphate + H(+). ATP-dependent carboxylate-amine ligase which exhibits weak glutamate--cysteine ligase activity. The sequence is that of Putative glutamate--cysteine ligase 2-1 from Mycolicibacterium vanbaalenii (strain DSM 7251 / JCM 13017 / BCRC 16820 / KCTC 9966 / NRRL B-24157 / PYR-1) (Mycobacterium vanbaalenii).